We begin with the raw amino-acid sequence, 196 residues long: Carnitine operon protein CaiE (196 aa).

The interval 174-196 is disordered; it reads QPLRQMEENRPRLQGTTDVTPKR. Polar residues predominate over residues 187-196; the sequence is QGTTDVTPKR.

This sequence belongs to the transferase hexapeptide repeat family.

It functions in the pathway amine and polyamine metabolism; carnitine metabolism. Functionally, overproduction of CaiE stimulates the activity of CaiB and CaiD. This chain is Carnitine operon protein CaiE (caiE), found in Escherichia coli (strain K12).